The following is a 157-amino-acid chain: 2-C-methyl-D-erythritol 2,4-cyclodiphosphate synthase (157 aa).

A divalent metal cation contacts are provided by aspartate 9 and histidine 11. 4-CDP-2-C-methyl-D-erythritol 2-phosphate-binding positions include 9 to 11 (DVH) and 35 to 36 (HS). Histidine 43 serves as a coordination point for a divalent metal cation. 4-CDP-2-C-methyl-D-erythritol 2-phosphate-binding positions include 57 to 59 (DIG), 62 to 66 (FPDTD), 101 to 107 (AEKPKMA), 133 to 136 (TTTE), phenylalanine 140, and arginine 143.

It belongs to the IspF family. In terms of assembly, homotrimer. The cofactor is a divalent metal cation.

It catalyses the reaction 4-CDP-2-C-methyl-D-erythritol 2-phosphate = 2-C-methyl-D-erythritol 2,4-cyclic diphosphate + CMP. It participates in isoprenoid biosynthesis; isopentenyl diphosphate biosynthesis via DXP pathway; isopentenyl diphosphate from 1-deoxy-D-xylulose 5-phosphate: step 4/6. Involved in the biosynthesis of isopentenyl diphosphate (IPP) and dimethylallyl diphosphate (DMAPP), two major building blocks of isoprenoid compounds. Catalyzes the conversion of 4-diphosphocytidyl-2-C-methyl-D-erythritol 2-phosphate (CDP-ME2P) to 2-C-methyl-D-erythritol 2,4-cyclodiphosphate (ME-CPP) with a corresponding release of cytidine 5-monophosphate (CMP). The chain is 2-C-methyl-D-erythritol 2,4-cyclodiphosphate synthase from Listeria monocytogenes serotype 4b (strain CLIP80459).